A 352-amino-acid chain; its full sequence is Photosystem II D2 protein (352 aa).

At Thr2 the chain carries N-acetylthreonine. Thr2 carries the post-translational modification Phosphothreonine. Residues 40 to 60 (CAYMALGGWLTGTTFVTSWYT) traverse the membrane as a helical segment. His117 provides a ligand contact to chlorophyll a. A helical membrane pass occupies residues 124–140 (GFMLRQFEIAQSLKLRP). Residues Gln129 and Asn142 each coordinate pheophytin a. Residues 152-165 (VFVSVFLIYPLGQA) traverse the membrane as a helical segment. His197 is a binding site for chlorophyll a. A helical transmembrane segment spans residues 207 to 227 (AALLCAIHGATVENTLFEDGD). Positions 214 and 261 each coordinate a plastoquinone. His214 is a Fe cation binding site. Position 268 (His268) interacts with Fe cation. Residues 278 to 294 (GLWMSAIGVVGLALNLR) form a helical membrane-spanning segment.

This sequence belongs to the reaction center PufL/M/PsbA/D family. PSII is composed of 1 copy each of membrane proteins PsbA, PsbB, PsbC, PsbD, PsbE, PsbF, PsbH, PsbI, PsbJ, PsbK, PsbL, PsbM, PsbT, PsbX, PsbY, PsbZ, Psb30/Ycf12, at least 3 peripheral proteins of the oxygen-evolving complex and a large number of cofactors. It forms dimeric complexes. The D1/D2 heterodimer binds P680, chlorophylls that are the primary electron donor of PSII, and subsequent electron acceptors. It shares a non-heme iron and each subunit binds pheophytin, quinone, additional chlorophylls, carotenoids and lipids. There is also a Cl(-1) ion associated with D1 and D2, which is required for oxygen evolution. The PSII complex binds additional chlorophylls, carotenoids and specific lipids. is required as a cofactor.

It is found in the plastid. It localises to the chloroplast thylakoid membrane. It catalyses the reaction 2 a plastoquinone + 4 hnu + 2 H2O = 2 a plastoquinol + O2. Functionally, photosystem II (PSII) is a light-driven water:plastoquinone oxidoreductase that uses light energy to abstract electrons from H(2)O, generating O(2) and a proton gradient subsequently used for ATP formation. It consists of a core antenna complex that captures photons, and an electron transfer chain that converts photonic excitation into a charge separation. The D1/D2 (PsbA/PsbD) reaction center heterodimer binds P680, the primary electron donor of PSII as well as several subsequent electron acceptors. D2 is needed for assembly of a stable PSII complex. The polypeptide is Photosystem II D2 protein (Stigeoclonium helveticum (Green alga)).